Consider the following 203-residue polypeptide: N-(5'-phosphoribosyl)anthranilate isomerase (203 aa).

The protein belongs to the TrpF family.

It carries out the reaction N-(5-phospho-beta-D-ribosyl)anthranilate = 1-(2-carboxyphenylamino)-1-deoxy-D-ribulose 5-phosphate. The protein operates within amino-acid biosynthesis; L-tryptophan biosynthesis; L-tryptophan from chorismate: step 3/5. This chain is N-(5'-phosphoribosyl)anthranilate isomerase, found in Thermoanaerobacter pseudethanolicus (strain ATCC 33223 / 39E) (Clostridium thermohydrosulfuricum).